A 305-amino-acid chain; its full sequence is MSLSRCLPLGQNARVIIIPARLAHAASTQAAAATDDAPNFFQKLAHRFQGVPLKGEAHAPKSMFEDCNKEWSAPEPLPAIPKDFKEHPDRDLVNYPYPARPMYPPKSRLLMMPDSWFTPFQKVTGVSGPYLFFGGLFAFLVNKELWVFEEQGHMTVGWILFYLLVTRTAGYKIDQGLYNGYQERVNFFKGLIQEDLKEAVEFKKTSAKQTESLNSIKESYPTALKESMALQLEATYRKNVQSVATELKRRIDYLKETEESKARVEREQLLKLINSEVDKEFSDRSFKDKYLQNAIQQLKGLNVQL.

Residues M1–L22 constitute a mitochondrion transit peptide.

This sequence belongs to the eukaryotic ATPase B chain family. In terms of assembly, subunit of the F-type ATPase which has 2 components, CF(1) - the catalytic core - and CF(0) - the membrane proton channel.

The protein resides in the mitochondrion. It localises to the mitochondrion inner membrane. Mitochondrial membrane ATP synthase (F(1)F(0) ATP synthase or Complex V) produces ATP from ADP in the presence of a proton gradient across the membrane which is generated by electron transport complexes of the respiratory chain. F-type ATPases consist of two structural domains, F(1) - containing the extramembraneous catalytic core, and F(0) - containing the membrane proton channel, linked together by a central stalk and a peripheral stalk. During catalysis, ATP synthesis in the catalytic domain of F(1) is coupled via a rotary mechanism of the central stalk subunits to proton translocation. Part of the complex F(0) domain and the peripheric stalk, which acts as a stator to hold the subunits of the catalytic subcomplexes relative to the rotary elements. Plays a role in somatic development. Does not play a role in germline development. This chain is ATP synthase F(0) complex subunit B2, mitochondrial, found in Caenorhabditis elegans.